The sequence spans 199 residues: Protein OPI10 homolog (199 aa).

The protein belongs to the OPI10 family.

The polypeptide is Protein OPI10 homolog (Aedes aegypti (Yellowfever mosquito)).